Consider the following 156-residue polypeptide: Endogenous retrovirus group K member 18 Pro protein (156 aa).

A Peptidase A2 domain is found at 21–96 (LEGLVDTGAD…IPLNLWGRDL (76 aa)). The active site involves Asp-26. The G-patch domain occupies 111–156 (YSPMSQKIMTKMGYIPGKGLGKNEDGIKVPIEAKINHGREGTGYPF).

Belongs to the peptidase A2 family. HERV class-II K(HML-2) subfamily. As to quaternary structure, active as a homodimer. Autoproteolytically processed at the N-terminus. Expected C-terminal autoprocessing not detected. The sequence shown is that of the processed Pro protein.

The enzyme catalyses Processing at the authentic HIV-1 PR recognition site and release of the mature p17 matrix and the p24 capsid protein, as a result of the cleavage of the -SQNY-|-PIVQ- cleavage site.. Its function is as follows. Retroviral proteases have roles in the processing of the primary translation products and the maturation of the viral particle. Endogenous Pro proteins may have kept, lost or modified their original function during evolution. The polypeptide is Endogenous retrovirus group K member 18 Pro protein (ERVK-18) (Homo sapiens (Human)).